Consider the following 582-residue polypeptide: Type I secretion system ATP-binding protein PrsD (582 aa).

3 helical membrane passes run 22–42 (FIGV…GSFF), 59–79 (LIAL…FELI), and 148–168 (IAIC…GGLI). In terms of domain architecture, ABC transmembrane type-1 spans 22-301 (FIGVGVASAL…AIGNWRGLVA (280 aa)). The region spanning 332–568 (LTVEGLASGP…VLRPQQVERQ (237 aa)) is the ABC transporter domain. 366-373 (GPSASGKS) lines the ATP pocket.

Belongs to the ABC transporter superfamily. As to quaternary structure, part of a type I secretion system composed of PrsD and PrsE.

The protein localises to the cell inner membrane. Its function is as follows. Mediates secretion of glycanase ExsH. This is Type I secretion system ATP-binding protein PrsD (prsD) from Rhizobium meliloti (strain 1021) (Ensifer meliloti).